A 740-amino-acid polypeptide reads, in one-letter code: Elongation factor 2 (740 aa).

In terms of domain architecture, tr-type G spans 23–264 (AQIRNAGTLA…MIIEHVPPPN (242 aa)). GTP is bound by residues 32–39 (AHVDHGKT), 98–102 (DTPGH), and 152–155 (NKID). Histidine 605 is modified (diphthamide).

It belongs to the TRAFAC class translation factor GTPase superfamily. Classic translation factor GTPase family. EF-G/EF-2 subfamily.

It is found in the cytoplasm. Its function is as follows. Catalyzes the GTP-dependent ribosomal translocation step during translation elongation. During this step, the ribosome changes from the pre-translocational (PRE) to the post-translocational (POST) state as the newly formed A-site-bound peptidyl-tRNA and P-site-bound deacylated tRNA move to the P and E sites, respectively. Catalyzes the coordinated movement of the two tRNA molecules, the mRNA and conformational changes in the ribosome. This chain is Elongation factor 2, found in Pyrobaculum neutrophilum (strain DSM 2338 / JCM 9278 / NBRC 100436 / V24Sta) (Thermoproteus neutrophilus).